The sequence spans 94 residues: uncharacterized protein (94 aa).

This is an uncharacterized protein from Treponema pallidum (strain Nichols).